The primary structure comprises 116 residues: Fluoride-specific ion channel FluC 1 (116 aa).

The next 4 helical transmembrane spans lie at 2 to 22 (LVLVGLAGAGAAVGALSRYGI), 33 to 53 (PLPIATLFINLTGALLLGWIL), 63 to 83 (IFLGTGIMGGYTTFSTMINEL), and 96 to 116 (WEYFGLSLVGGLVMVYLGTLI). Positions 71 and 74 each coordinate Na(+).

It belongs to the fluoride channel Fluc/FEX (TC 1.A.43) family.

The protein localises to the cell membrane. It catalyses the reaction fluoride(in) = fluoride(out). Its activity is regulated as follows. Na(+) is not transported, but it plays an essential structural role and its presence is essential for fluoride channel function. Its function is as follows. Fluoride-specific ion channel. Important for reducing fluoride concentration in the cell, thus reducing its toxicity. The polypeptide is Fluoride-specific ion channel FluC 1 (Lactiplantibacillus plantarum (strain ATCC BAA-793 / NCIMB 8826 / WCFS1) (Lactobacillus plantarum)).